Consider the following 308-residue polypeptide: uncharacterized protein (308 aa).

2 stretches are compositionally biased toward polar residues: residues 138–148 and 205–229; these read WSFTKHGSNTP and STSHLNHPSTSNSPDPLYSASQPPS. 2 disordered regions span residues 138-157 and 205-235; these read WSFTKHGSNTPSDSSSPLCN and STSHLNHPSTSNSPDPLYSASQPPSIKTDAS.

Its subcellular location is the cytoplasm. This is an uncharacterized protein from Schizosaccharomyces pombe (strain 972 / ATCC 24843) (Fission yeast).